Here is a 272-residue protein sequence, read N- to C-terminus: Putative phosphoenolpyruvate synthase regulatory protein (272 aa).

151–158 (GVSRSGKT) is an ADP binding site.

The protein belongs to the pyruvate, phosphate/water dikinase regulatory protein family. PSRP subfamily.

It carries out the reaction [pyruvate, water dikinase] + ADP = [pyruvate, water dikinase]-phosphate + AMP + H(+). The catalysed reaction is [pyruvate, water dikinase]-phosphate + phosphate + H(+) = [pyruvate, water dikinase] + diphosphate. Bifunctional serine/threonine kinase and phosphorylase involved in the regulation of the phosphoenolpyruvate synthase (PEPS) by catalyzing its phosphorylation/dephosphorylation. This Desulfotalea psychrophila (strain LSv54 / DSM 12343) protein is Putative phosphoenolpyruvate synthase regulatory protein.